The primary structure comprises 104 residues: PLAT domain-containing protein 3 (104 aa).

One can recognise a PLAT domain in the interval 1-104 (MSLRLYDSYG…LARDASPYEL (104 aa)).

In Arabidopsis thaliana (Mouse-ear cress), this protein is PLAT domain-containing protein 3.